We begin with the raw amino-acid sequence, 93 residues long: Molybdopterin synthase sulfur carrier subunit (93 aa).

Position 93 is a 1-thioglycine; alternate (Gly93). Gly93 carries the post-translational modification Glycyl adenylate; alternate.

Belongs to the MoaD family. MOCS2A subfamily. In terms of assembly, heterotetramer; composed of 2 small (MOCS2A) and 2 large (MOCS2B) subunits. Post-translationally, C-terminal thiocarboxylation occurs in 2 steps, it is first acyl-adenylated (-COAMP) via the hesA/moeB/thiF part of uba4, then thiocarboxylated (-COSH) via the rhodanese domain of uba4.

The protein localises to the cytoplasm. It participates in cofactor biosynthesis; molybdopterin biosynthesis. In terms of biological role, acts as a sulfur carrier required for molybdopterin biosynthesis. Component of the molybdopterin synthase complex that catalyzes the conversion of precursor Z into molybdopterin by mediating the incorporation of 2 sulfur atoms into precursor Z to generate a dithiolene group. In the complex, serves as sulfur donor by being thiocarboxylated (-COSH) at its C-terminus by uba4. After interaction with MOCS2B, the sulfur is then transferred to precursor Z to form molybdopterin. In Pyrenophora tritici-repentis (strain Pt-1C-BFP) (Wheat tan spot fungus), this protein is Molybdopterin synthase sulfur carrier subunit.